The chain runs to 162 residues: NADH-quinone oxidoreductase subunit I 1 (162 aa).

4Fe-4S ferredoxin-type domains follow at residues 44-74 (LRTY…VQAA) and 90-119 (YKYQ…LTQE). Residues C54, C57, C60, C64, C99, C102, C105, and C109 each contribute to the [4Fe-4S] cluster site.

This sequence belongs to the complex I 23 kDa subunit family. NDH-1 is composed of 14 different subunits. Subunits NuoA, H, J, K, L, M, N constitute the membrane sector of the complex. It depends on [4Fe-4S] cluster as a cofactor.

It is found in the cell membrane. It catalyses the reaction a quinone + NADH + 5 H(+)(in) = a quinol + NAD(+) + 4 H(+)(out). Functionally, NDH-1 shuttles electrons from NADH, via FMN and iron-sulfur (Fe-S) centers, to quinones in the respiratory chain. The immediate electron acceptor for the enzyme in this species is believed to be ubiquinone. Couples the redox reaction to proton translocation (for every two electrons transferred, four hydrogen ions are translocated across the cytoplasmic membrane), and thus conserves the redox energy in a proton gradient. The chain is NADH-quinone oxidoreductase subunit I 1 from Symbiobacterium thermophilum (strain DSM 24528 / JCM 14929 / IAM 14863 / T).